We begin with the raw amino-acid sequence, 182 residues long: MAATMMNKTVVLSKGCTKPSAVPKVSINRKGFLNTAMNKKREMMVWQPFNNKMFETFSYLPPLTDEQISKQVDYILANSWTPCLEFAASDQAYAGNENCIRMGPVASTYQDNRYWTMWKLPMFGCTDGSQVLSEIQACTKAFPDAYIRLVCFDANRQVQISGFLVHRPPSATDYRLPADRQV.

The N-terminal 41 residues, 1 to 41 (MAATMMNKTVVLSKGCTKPSAVPKVSINRKGFLNTAMNKKR), are a transit peptide targeting the chloroplast.

Belongs to the RuBisCO small chain family. Heterohexadecamer of 8 large and 8 small subunits.

The protein resides in the plastid. The protein localises to the chloroplast. RuBisCO catalyzes two reactions: the carboxylation of D-ribulose 1,5-bisphosphate, the primary event in carbon dioxide fixation, as well as the oxidative fragmentation of the pentose substrate. Both reactions occur simultaneously and in competition at the same active site. Although the small subunit is not catalytic it is essential for maximal activity. The chain is Ribulose bisphosphate carboxylase small subunit, chloroplastic 4 from Acetabularia peniculus (Green alga).